Here is a 441-residue protein sequence, read N- to C-terminus: Na(+)/H(+) antiporter NhaA 2 (441 aa).

12 consecutive transmembrane segments (helical) span residues 34-54 (VGGA…NSPW), 77-97 (LTLG…VVGL), 115-135 (ALPM…FVAV), 146-166 (GWAI…AVIS), 176-196 (FLLT…AVFY), 199-219 (EINL…ALCV), 225-245 (SWWL…ESGV), 249-269 (VAGV…AGGP), 290-310 (VAVP…VSGL), 317-337 (PITL…IFLT), 355-375 (WIDV…SLLI), and 389-409 (FVKV…AVLL).

This sequence belongs to the NhaA Na(+)/H(+) (TC 2.A.33) antiporter family.

The protein resides in the cell membrane. It catalyses the reaction Na(+)(in) + 2 H(+)(out) = Na(+)(out) + 2 H(+)(in). In terms of biological role, na(+)/H(+) antiporter that extrudes sodium in exchange for external protons. The sequence is that of Na(+)/H(+) antiporter NhaA 2 from Mycobacterium sp. (strain MCS).